Reading from the N-terminus, the 468-residue chain is SVGFKAGVKEYKLTYYTPEYETKDTDILAAFRVTPQPGVPPEEAGAAVAAESSTGTWTTVWTDGLTSLDRYKGRCYHIEPVPGEADQYICYVAYPLDLFEEGSVTNMFTSIVGNVFGFKALRALRLEDLRIPPAYIKTFQGPPHGIQVERDKLNKYGRPLLGCTIKPKLGLSAKNYGRAVYECLRGGLDFTKDDENVNSQPFMRWRDRFLFCAEALYKAQAETGEIKGHYLNATAGTCEEMIKRAVFARELGVPIVMHDYLTGGFTANTSLAHYCRDNGLLLHIHRAMHAVIDRQKNHGIHFRVLAKALRMSGGDHIHSGTVVGKLEGERDITLGFVDLLRDDFIEKDRSRGIYFTQDWVSLPGVIPVASGGIHVWHMPALTEIFGDDSVLQFGGGTLGHPWGNAPGAVANRVALEACVKARNEGRDLAAEGNTIIREASKWSLELAAACEVWKEIKFEFAAVDTLDR.

At Lys-5 the chain carries N6,N6,N6-trimethyllysine. Substrate is bound by residues Asn-114 and Thr-164. Lys-166 serves as the catalytic Proton acceptor. Lys-168 is a binding site for substrate. Mg(2+) contacts are provided by Lys-192, Asp-194, and Glu-195. Lys-192 carries the N6-carboxylysine modification. Residue His-285 is the Proton acceptor of the active site. Positions 286, 318, and 370 each coordinate substrate.

This sequence belongs to the RuBisCO large chain family. Type I subfamily. Heterohexadecamer of 8 large chains and 8 small chains; disulfide-linked. The disulfide link is formed within the large subunit homodimers. Mg(2+) serves as cofactor. The disulfide bond which can form in the large chain dimeric partners within the hexadecamer appears to be associated with oxidative stress and protein turnover.

It is found in the plastid. The protein resides in the chloroplast. It carries out the reaction 2 (2R)-3-phosphoglycerate + 2 H(+) = D-ribulose 1,5-bisphosphate + CO2 + H2O. It catalyses the reaction D-ribulose 1,5-bisphosphate + O2 = 2-phosphoglycolate + (2R)-3-phosphoglycerate + 2 H(+). In terms of biological role, ruBisCO catalyzes two reactions: the carboxylation of D-ribulose 1,5-bisphosphate, the primary event in carbon dioxide fixation, as well as the oxidative fragmentation of the pentose substrate in the photorespiration process. Both reactions occur simultaneously and in competition at the same active site. This is Ribulose bisphosphate carboxylase large chain from Tecoma stans (Yellow bells).